A 287-amino-acid chain; its full sequence is Ribosomal RNA small subunit methyltransferase A (287 aa).

S-adenosyl-L-methionine-binding residues include asparagine 28, leucine 30, glycine 55, glutamate 77, aspartate 103, and asparagine 123.

The protein belongs to the class I-like SAM-binding methyltransferase superfamily. rRNA adenine N(6)-methyltransferase family. RsmA subfamily.

The protein resides in the cytoplasm. It catalyses the reaction adenosine(1518)/adenosine(1519) in 16S rRNA + 4 S-adenosyl-L-methionine = N(6)-dimethyladenosine(1518)/N(6)-dimethyladenosine(1519) in 16S rRNA + 4 S-adenosyl-L-homocysteine + 4 H(+). Functionally, specifically dimethylates two adjacent adenosines (A1518 and A1519) in the loop of a conserved hairpin near the 3'-end of 16S rRNA in the 30S particle. May play a critical role in biogenesis of 30S subunits. The sequence is that of Ribosomal RNA small subunit methyltransferase A from Rhodopseudomonas palustris (strain BisB5).